Here is a 48-residue protein sequence, read N- to C-terminus: Large ribosomal subunit protein bL36c (48 aa).

It belongs to the bacterial ribosomal protein bL36 family.

The protein resides in the plastid. The protein localises to the chloroplast. The sequence is that of Large ribosomal subunit protein bL36c (rpl36) from Guillardia theta (Cryptophyte).